The chain runs to 25 residues: Small ribosomal subunit protein eS32 (25 aa).

The interval 1 to 25 is disordered; that stretch reads MGGVGKTKRMRRLKRKRRKMRQRSK.

Belongs to the eukaryotic ribosomal protein eS32 family. As to quaternary structure, component of the small ribosomal subunit.

The protein is Small ribosomal subunit protein eS32 (RPL41) of Glycine max (Soybean).